The following is a 255-amino-acid chain: Thiazole synthase (255 aa).

Lysine 95 (schiff-base intermediate with DXP) is an active-site residue. 1-deoxy-D-xylulose 5-phosphate-binding positions include glycine 156, 182–183 (AG), and 204–205 (NT).

Belongs to the ThiG family. Homotetramer. Forms heterodimers with either ThiH or ThiS.

It is found in the cytoplasm. It carries out the reaction [ThiS sulfur-carrier protein]-C-terminal-Gly-aminoethanethioate + 2-iminoacetate + 1-deoxy-D-xylulose 5-phosphate = [ThiS sulfur-carrier protein]-C-terminal Gly-Gly + 2-[(2R,5Z)-2-carboxy-4-methylthiazol-5(2H)-ylidene]ethyl phosphate + 2 H2O + H(+). Its pathway is cofactor biosynthesis; thiamine diphosphate biosynthesis. Its function is as follows. Catalyzes the rearrangement of 1-deoxy-D-xylulose 5-phosphate (DXP) to produce the thiazole phosphate moiety of thiamine. Sulfur is provided by the thiocarboxylate moiety of the carrier protein ThiS. In vitro, sulfur can be provided by H(2)S. The protein is Thiazole synthase of Photorhabdus laumondii subsp. laumondii (strain DSM 15139 / CIP 105565 / TT01) (Photorhabdus luminescens subsp. laumondii).